A 347-amino-acid chain; its full sequence is Holliday junction branch migration complex subunit RuvB (347 aa).

The tract at residues 1-181 (MTRNSLLNPE…FGIPVRLQFY (181 aa)) is large ATPase domain (RuvB-L). Positions 20, 21, 62, 65, 66, 67, 171, 181, and 218 each coordinate ATP. T66 contacts Mg(2+). Residues 182–252 (SIEELRQVIT…IADEALNRLE (71 aa)) are small ATPAse domain (RuvB-S). Positions 255–347 (KLGLDLMDRR…SEIKNQPGLL (93 aa)) are head domain (RuvB-H). 3 residues coordinate DNA: R291, R310, and R315.

This sequence belongs to the RuvB family. Homohexamer. Forms an RuvA(8)-RuvB(12)-Holliday junction (HJ) complex. HJ DNA is sandwiched between 2 RuvA tetramers; dsDNA enters through RuvA and exits via RuvB. An RuvB hexamer assembles on each DNA strand where it exits the tetramer. Each RuvB hexamer is contacted by two RuvA subunits (via domain III) on 2 adjacent RuvB subunits; this complex drives branch migration. In the full resolvosome a probable DNA-RuvA(4)-RuvB(12)-RuvC(2) complex forms which resolves the HJ.

Its subcellular location is the cytoplasm. The enzyme catalyses ATP + H2O = ADP + phosphate + H(+). Its function is as follows. The RuvA-RuvB-RuvC complex processes Holliday junction (HJ) DNA during genetic recombination and DNA repair, while the RuvA-RuvB complex plays an important role in the rescue of blocked DNA replication forks via replication fork reversal (RFR). RuvA specifically binds to HJ cruciform DNA, conferring on it an open structure. The RuvB hexamer acts as an ATP-dependent pump, pulling dsDNA into and through the RuvAB complex. RuvB forms 2 homohexamers on either side of HJ DNA bound by 1 or 2 RuvA tetramers; 4 subunits per hexamer contact DNA at a time. Coordinated motions by a converter formed by DNA-disengaged RuvB subunits stimulates ATP hydrolysis and nucleotide exchange. Immobilization of the converter enables RuvB to convert the ATP-contained energy into a lever motion, pulling 2 nucleotides of DNA out of the RuvA tetramer per ATP hydrolyzed, thus driving DNA branch migration. The RuvB motors rotate together with the DNA substrate, which together with the progressing nucleotide cycle form the mechanistic basis for DNA recombination by continuous HJ branch migration. Branch migration allows RuvC to scan DNA until it finds its consensus sequence, where it cleaves and resolves cruciform DNA. In Zymomonas mobilis subsp. mobilis (strain ATCC 31821 / ZM4 / CP4), this protein is Holliday junction branch migration complex subunit RuvB.